The following is a 296-amino-acid chain: NAD kinase (296 aa).

Asp-73 (proton acceptor) is an active-site residue. NAD(+) contacts are provided by residues 73–74 (DG), Lys-78, 151–152 (NE), Arg-178, Asp-180, and 191–196 (TAHAMS).

It belongs to the NAD kinase family. A divalent metal cation serves as cofactor.

The protein localises to the cytoplasm. It carries out the reaction NAD(+) + ATP = ADP + NADP(+) + H(+). Involved in the regulation of the intracellular balance of NAD and NADP, and is a key enzyme in the biosynthesis of NADP. Catalyzes specifically the phosphorylation on 2'-hydroxyl of the adenosine moiety of NAD to yield NADP. This is NAD kinase from Francisella tularensis subsp. tularensis (strain WY96-3418).